Consider the following 485-residue polypeptide: Betaine aldehyde dehydrogenase (485 aa).

K(+)-binding residues include Thr23, Ile24, and Asp90. Residue 147–149 (GAW) coordinates NAD(+). The active-site Charge relay system is the Lys159. Residues 173–176 (KPSE) and 226–229 (EVGT) each bind NAD(+). Leu241 is a binding site for K(+). Residue Glu247 is the Proton acceptor of the active site. NAD(+) is bound by residues Gly249, Cys281, and Glu382. Catalysis depends on Cys281, which acts as the Nucleophile. Cys281 is modified (cysteine sulfenic acid (-SOH)). K(+)-binding residues include Lys452 and Gly455. The active-site Charge relay system is the Glu459.

It belongs to the aldehyde dehydrogenase family. Dimer of dimers. It depends on K(+) as a cofactor.

The catalysed reaction is betaine aldehyde + NAD(+) + H2O = glycine betaine + NADH + 2 H(+). Its pathway is amine and polyamine biosynthesis; betaine biosynthesis via choline pathway; betaine from betaine aldehyde: step 1/1. Involved in the biosynthesis of the osmoprotectant glycine betaine. Catalyzes the irreversible oxidation of betaine aldehyde to the corresponding acid. This is Betaine aldehyde dehydrogenase from Marinomonas sp. (strain MWYL1).